Consider the following 356-residue polypeptide: Phosphoserine aminotransferase (356 aa).

Position 41 (Arg-41) interacts with L-glutamate. Residues 76-77 (AS), Trp-102, Thr-150, Asp-169, and Gln-192 each bind pyridoxal 5'-phosphate. Lys-193 carries the N6-(pyridoxal phosphate)lysine modification. Position 234–235 (234–235 (NT)) interacts with pyridoxal 5'-phosphate.

Belongs to the class-V pyridoxal-phosphate-dependent aminotransferase family. SerC subfamily. In terms of assembly, homodimer. The cofactor is pyridoxal 5'-phosphate.

It is found in the cytoplasm. The catalysed reaction is O-phospho-L-serine + 2-oxoglutarate = 3-phosphooxypyruvate + L-glutamate. The enzyme catalyses 4-(phosphooxy)-L-threonine + 2-oxoglutarate = (R)-3-hydroxy-2-oxo-4-phosphooxybutanoate + L-glutamate. Its pathway is amino-acid biosynthesis; L-serine biosynthesis; L-serine from 3-phospho-D-glycerate: step 2/3. The protein operates within cofactor biosynthesis; pyridoxine 5'-phosphate biosynthesis; pyridoxine 5'-phosphate from D-erythrose 4-phosphate: step 3/5. Its function is as follows. Catalyzes the reversible conversion of 3-phosphohydroxypyruvate to phosphoserine and of 3-hydroxy-2-oxo-4-phosphonooxybutanoate to phosphohydroxythreonine. The polypeptide is Phosphoserine aminotransferase (Flavobacterium psychrophilum (strain ATCC 49511 / DSM 21280 / CIP 103535 / JIP02/86)).